Reading from the N-terminus, the 142-residue chain is Large ribosomal subunit protein uL11 (142 aa).

The protein belongs to the universal ribosomal protein uL11 family. Part of the ribosomal stalk of the 50S ribosomal subunit. Interacts with L10 and the large rRNA to form the base of the stalk. L10 forms an elongated spine to which L12 dimers bind in a sequential fashion forming a multimeric L10(L12)X complex. One or more lysine residues are methylated.

Functionally, forms part of the ribosomal stalk which helps the ribosome interact with GTP-bound translation factors. The protein is Large ribosomal subunit protein uL11 of Hahella chejuensis (strain KCTC 2396).